The primary structure comprises 832 residues: Translation initiation factor IF-2 (832 aa).

Residues 1–244 (MSDTDGKKTL…KAMGGSQERE (244 aa)) form a disordered region. The span at 18–27 (TGQVKQSFSH) shows a compositional bias: polar residues. Residues 81–141 (KANESEEAER…EARKKAEADA (61 aa)) are compositionally biased toward basic and acidic residues. The span at 142–171 (SSKPAAARSKADDPATMDPAAAQAAEARGA) shows a compositional bias: low complexity. Composition is skewed to basic and acidic residues over residues 178 to 201 (PRKERTADRAQPRKEQKGKGDDRR) and 227 to 244 (RKQERERRKAMGGSQERE). Residues 329–497 (PRPPVITVMG…SIALQAEILE (169 aa)) form the tr-type G domain. Residues 338 to 345 (GHVDHGKT) form a G1 region. GTP is bound at residue 338 to 345 (GHVDHGKT). The tract at residues 363 to 367 (GITQH) is G2. Residues 385–388 (DTPG) form a G3 region. Residues 385 to 389 (DTPGH) and 439 to 442 (NKID) contribute to the GTP site. The segment at 439–442 (NKID) is G4. The segment at 475 to 477 (SAI) is G5.

The protein belongs to the TRAFAC class translation factor GTPase superfamily. Classic translation factor GTPase family. IF-2 subfamily.

Its subcellular location is the cytoplasm. Functionally, one of the essential components for the initiation of protein synthesis. Protects formylmethionyl-tRNA from spontaneous hydrolysis and promotes its binding to the 30S ribosomal subunits. Also involved in the hydrolysis of GTP during the formation of the 70S ribosomal complex. The chain is Translation initiation factor IF-2 from Dinoroseobacter shibae (strain DSM 16493 / NCIMB 14021 / DFL 12).